The primary structure comprises 213 residues: Uridine kinase (213 aa).

15–22 is an ATP binding site; the sequence is GASASGKS.

It belongs to the uridine kinase family.

The protein resides in the cytoplasm. The catalysed reaction is uridine + ATP = UMP + ADP + H(+). It carries out the reaction cytidine + ATP = CMP + ADP + H(+). Its pathway is pyrimidine metabolism; CTP biosynthesis via salvage pathway; CTP from cytidine: step 1/3. It functions in the pathway pyrimidine metabolism; UMP biosynthesis via salvage pathway; UMP from uridine: step 1/1. This is Uridine kinase from Salmonella paratyphi A (strain ATCC 9150 / SARB42).